A 221-amino-acid chain; its full sequence is Flagellar L-ring protein 1 (221 aa).

An N-terminal signal peptide occupies residues 1 to 16; the sequence is MKRFLILTPMVLALCG. Cys-17 carries the N-palmitoyl cysteine lipid modification. The S-diacylglycerol cysteine moiety is linked to residue Cys-17.

The protein belongs to the FlgH family. The basal body constitutes a major portion of the flagellar organelle and consists of four rings (L,P,S, and M) mounted on a central rod.

Its subcellular location is the cell outer membrane. The protein resides in the bacterial flagellum basal body. Functionally, assembles around the rod to form the L-ring and probably protects the motor/basal body from shearing forces during rotation. The chain is Flagellar L-ring protein 1 from Yersinia pestis.